Reading from the N-terminus, the 120-residue chain is Large ribosomal subunit protein uL14 (120 aa).

The protein belongs to the universal ribosomal protein uL14 family. Part of the 50S ribosomal subunit. Forms a cluster with proteins L3 and L19. In the 70S ribosome, L14 and L19 interact and together make contacts with the 16S rRNA in bridges B5 and B8.

Its function is as follows. Binds to 23S rRNA. Forms part of two intersubunit bridges in the 70S ribosome. The sequence is that of Large ribosomal subunit protein uL14 from Dictyoglomus turgidum (strain DSM 6724 / Z-1310).